A 407-amino-acid chain; its full sequence is Aminomethyltransferase, mitochondrial (407 aa).

A mitochondrion-targeting transit peptide spans 1–29 (MRGGLWQVGQSITRRLGQSDKKTIVRRWY). E234, R265, and Y403 together coordinate substrate.

This sequence belongs to the GcvT family. In terms of assembly, the glycine cleavage system is composed of four proteins: P, T, L and H.

Its subcellular location is the mitochondrion. It carries out the reaction N(6)-[(R)-S(8)-aminomethyldihydrolipoyl]-L-lysyl-[protein] + (6S)-5,6,7,8-tetrahydrofolate = N(6)-[(R)-dihydrolipoyl]-L-lysyl-[protein] + (6R)-5,10-methylene-5,6,7,8-tetrahydrofolate + NH4(+). In terms of biological role, the glycine cleavage system catalyzes the degradation of glycine. The chain is Aminomethyltransferase, mitochondrial (GDCST) from Flaveria trinervia (Clustered yellowtops).